Consider the following 210-residue polypeptide: Probable HTH-type transcriptional regulator ArpR (210 aa).

The 61-residue stretch at 10 to 70 folds into the HTH tetR-type domain; it reads QETRAQIIEA…ALLDSLHETH (61 aa). The segment at residues 33-52 is a DNA-binding region (H-T-H motif); that stretch reads TLADIAELAGVTRGAIYWHF.

Probable regulatory protein for the antibiotic efflux pump arpABC operon. May function as a repressor. In Pseudomonas putida (Arthrobacter siderocapsulatus), this protein is Probable HTH-type transcriptional regulator ArpR (arpR).